Reading from the N-terminus, the 298-residue chain is Olfactory receptor 52Z1P (298 aa).

The Extracellular segment spans residues 1–14 (MGIPGLEGLHTWIS). A helical transmembrane segment spans residues 15–35 (IPFSFMYIVAVAGNIFLIFLI). The Cytoplasmic portion of the chain corresponds to 36–43 (MTERSLHE). The chain crosses the membrane as a helical span at residues 44–64 (PMYLFLSMLASADFLLATAAA). The Extracellular segment spans residues 65–85 (PKVLAILWFHSMDISFGSCVS). C83 and C164 form a disulfide bridge. The chain crosses the membrane as a helical span at residues 86-106 (QMFFIHFIFVAESAILLAMAF). Over 107 to 128 (DRYVAICYPLRYTILTSSAVRK) the chain is Cytoplasmic. The chain crosses the membrane as a helical span at residues 129 to 149 (IGIAAVVRSFFICCPFIFLVY). Residues 150-178 (RLTYCGRNIIPHSYCEHIARLACGNINVN) are Extracellular-facing. Residues 179–199 (IIYGLTVALLSTGLDIVLIII) traverse the membrane as a helical segment. The Cytoplasmic segment spans residues 200-223 (SYTMILHSVFQISSWAARFKALST). The helical transmembrane segment at 224–244 (CGSHICVIFMFYTPAFFSFLA) threads the bilayer. Over 245–257 (HRFGGKTIPHHIH) the chain is Extracellular. Residues 258-278 (ILVGSLYVLVPPMLNPIIYGV) form a helical membrane-spanning segment. Over 279–298 (KTKQIKDRVILLFSPISVCC) the chain is Cytoplasmic.

It belongs to the G-protein coupled receptor 1 family.

It localises to the cell membrane. Its function is as follows. Odorant receptor. This Homo sapiens (Human) protein is Olfactory receptor 52Z1P.